A 372-amino-acid polypeptide reads, in one-letter code: Alanine racemase (372 aa).

K35 acts as the Proton acceptor; specific for D-alanine in catalysis. An N6-(pyridoxal phosphate)lysine modification is found at K35. A substrate-binding site is contributed by R143. Y268 acts as the Proton acceptor; specific for L-alanine in catalysis. M316 contacts substrate.

Belongs to the alanine racemase family. The cofactor is pyridoxal 5'-phosphate.

It catalyses the reaction L-alanine = D-alanine. The protein operates within amino-acid biosynthesis; D-alanine biosynthesis; D-alanine from L-alanine: step 1/1. Functionally, catalyzes the interconversion of L-alanine and D-alanine. May also act on other amino acids. The protein is Alanine racemase (alr) of Shewanella frigidimarina (strain NCIMB 400).